The primary structure comprises 290 residues: Protease HtpX (290 aa).

2 helical membrane-spanning segments follow: residues 4–24 (IMLFLATNLAVLIIASITLKL) and 36–56 (GSLLIFCAVFGFAGSLVSLFI). His-142 provides a ligand contact to Zn(2+). Glu-143 is a catalytic residue. His-146 is a binding site for Zn(2+). A run of 2 helical transmembrane segments spans residues 150–170 (GDMVTLALIQGVVNTFVMFFA) and 193–213 (FIATIFAELVLGILASIIVMW). Glu-219 is a Zn(2+) binding site.

This sequence belongs to the peptidase M48B family. Zn(2+) is required as a cofactor.

The protein localises to the cell inner membrane. The protein is Protease HtpX of Ectopseudomonas mendocina (strain ymp) (Pseudomonas mendocina).